Consider the following 229-residue polypeptide: Uridylate cyclase (229 aa).

Residues 47–178 enclose the Guanylate cyclase domain; it reads TVLYADLDGS…RAANYAAKLT (132 aa). Tyr-50 is a binding site for a ribonucleoside 5'-triphosphate. Positions 52 and 96 each coordinate Mn(2+). Residue Arg-97 coordinates a ribonucleoside 5'-triphosphate.

The protein belongs to the adenylyl cyclase class-4/guanylyl cyclase family. Pyrimidine cyclase subfamily. As to quaternary structure, homodimer. It depends on Mn(2+) as a cofactor.

The protein resides in the cytoplasm. The catalysed reaction is UTP = 3',5'-cyclic UMP + diphosphate. Pycsar (pyrimidine cyclase system for antiphage resistance) provides immunity against bacteriophage. The pyrimidine cyclase (PycC) synthesizes cyclic nucleotides in response to infection; these serve as specific second messenger signals. The signals activate the adjacent effector, leading to bacterial cell death and abortive phage infection. A clade B Pycsar system. In terms of biological role, the pyrimidine cyclase gene of a two-gene Pycsar system, generates cyclic UMP (cUMP) from UTP, has little to no activity on ATP, CTP or GTP. Expression of this and adjacent effector BcPycTIR (AC A0A0J5WTU0) probably confers resistance to bacteriophage. The genes are probably only expressed in response to bacteriophage infection. This chain is Uridylate cyclase, found in Burkholderia cepacia (Pseudomonas cepacia).